A 930-amino-acid polypeptide reads, in one-letter code: RNA-binding protein 10 (930 aa).

Basic and acidic residues-rich tracts occupy residues 1–14 and 21–45; these read MEYERRGGRGDRTG and RSQDDSGENRSRDHDYRDMDYRSYP. Positions 1–127 are disordered; it reads MEYERRGGRG…EDEEEEEEKA (127 aa). Residues 59 to 70 show a composition bias toward acidic residues; that stretch reads DSSEEQSAEDSY. Residues serine 61 and serine 89 each carry the phosphoserine modification. Over residues 80–89 the composition is skewed to basic residues; it reads RRRRRRHRHS. Positions 98–111 are enriched in basic and acidic residues; sequence RDGDYRDQDYRTEQ. Over residues 112 to 125 the composition is skewed to acidic residues; sequence GEEEEEEDEEEEEE. The region spanning 129–209 is the RRM 1 domain; that stretch reads NIVMLRMLPQ…QKVSMHYSDP (81 aa). The segment at 212 to 242 adopts a RanBP2-type zinc-finger fold; that stretch reads KINEDWLCNKCGVQNFKRREKCFKCGVPKSE. Residues 300-384 form the RRM 2 domain; sequence DTIILRNLNP…KTINVEFAKG (85 aa). Lysine 383 is subject to N6-acetyllysine. Disordered regions lie at residues 464–487, 503–522, 537–566, 620–646, and 712–753; these read GPGMTGTKGDPAGTGPEASLEAGA, APGLYQQSAEGSSGQSTATN, ELQSPTQPSSSAFPPATSPTAPEAYSQYPV, EQSADGHKDTGASSKEGKEKKEKHKTK, and DLPK…EEKL. Residues 507-522 are compositionally biased toward polar residues; that stretch reads YQQSAEGSSGQSTATN. The segment covering 540 to 562 has biased composition (low complexity); it reads SPTQPSSSAFPPATSPTAPEAYS. The span at 623 to 639 shows a compositional bias: basic and acidic residues; the sequence is ADGHKDTGASSKEGKEK. A phosphoserine mark is found at serine 718, serine 723, serine 733, serine 736, and serine 738. Over residues 743 to 753 the composition is skewed to basic and acidic residues; the sequence is ERGGPEREEKL. The segment at 759–784 adopts a C2H2-type; atypical zinc-finger fold; the sequence is LACLLCRRQFPSKEALIRHQQLSGLH. A phosphoserine mark is found at serine 781, serine 797, and serine 845. The disordered stretch occupies residues 818–861; the sequence is AAERREKYGIPEPPEPKRRKYGGISTASVDFEQPTRDGLGSDNI. The G-patch domain maps to 858-904; it reads SDNIGSRMLQAMGWKEGSGLGRKKQGIVTPIEAQTRVRGSGLGARGS. Arginine 902 bears the Omega-N-methylarginine mark.

Associates with the spliceosome. Component of a large chromatin remodeling complex, at least composed of MYSM1, PCAF, RBM10 and KIF11/TRIP5.

It localises to the nucleus. In terms of biological role, binds to ssRNA containing the consensus sequence 5'-AGGUAA-3'. May be involved in post-transcriptional processing, most probably in mRNA splicing. Binds to RNA homopolymers, with a preference for poly(G) and poly(U) and little for poly(A). May bind to specific miRNA hairpins. In Mus musculus (Mouse), this protein is RNA-binding protein 10.